We begin with the raw amino-acid sequence, 95 residues long: RING finger protein Z (95 aa).

Residue Gly2 is the site of N-myristoyl glycine; by host attachment. The RING-type; atypical zinc finger occupies 38-74; that stretch reads CKRCWFATKGLIACSDHYLCLNCLTIMLSDGNFCEVC. The PTAP/PSAP motif motif lies at 88–91; the sequence is PSAP.

Belongs to the arenaviridae Z protein family. In terms of assembly, interacts with protein NP; this interaction probably directs the encapsidated genome to budding sites. Interacts (via RING domain) with polymerase L; this interaction inhibits viral transcription and replication, Z partially blocks the product exit tunnel for the releasing nascent RNA product. Interacts with the glycoprotein complex; this interaction plays a role in virion budding. Interacts with host eIF4E; this interaction results in eIF4E reduced affinity for its substrate, the 5'-m7 G cap structure. Interacts (via late-budding domain) with host TSG101; this interaction is essential for budding and release of viral particles. Interacts with host RPLP0; this interaction may serve to load ribosome-like particles inside the virion. Interacts with host PML; this interaction induces PML bodies redistribution in the cytoplasm upon viral infection. Post-translationally, myristoylation is required for the role of RING finger protein Z in assembly and budding.

The protein localises to the virion. It is found in the host cytoplasm. Its subcellular location is the host perinuclear region. It localises to the host cell membrane. In terms of biological role, plays a crucial role in virion assembly and budding. Expressed late in the virus life cycle, it acts as an inhibitor of viral transcription and RNA synthesis by interacting with the viral polymerase L. Presumably recruits the NP encapsidated genome to cellular membranes at budding sites via direct interaction with NP. Plays critical roles in the final steps of viral release by interacting with host TSG101, a member of the vacuolar protein-sorting pathway and using other cellular host proteins involved in vesicle formation pathway. The budding of the virus progeny occurs after association of protein Z with the viral glycoprotein complex SSP-GP1-GP2 at the cell periphery, step that requires myristoylation of protein Z. Also selectively represses protein production by associating with host eIF4E. In cell-based minigenome assay, has an inhibitory effect on the ribonucleoprotein machinery (vRNP), which is responsible for the replication and transcription of the viral genome. The protein is RING finger protein Z of Sooretamys angouya (Paraguayan rice rat).